A 500-amino-acid chain; its full sequence is NAD(P)H-quinone oxidoreductase chain 4, chloroplastic (500 aa).

The next 14 helical transmembrane spans lie at 4–24, 31–51, 84–104, 111–131, 134–154, 167–187, 212–232, 242–262, 272–292, 308–328, 330–350, 386–406, 411–431, and 462–482; these read FPWL…IFFL, VIFW…TYAF, GLSI…TLAA, ARLF…LFSC, LLLF…LLSM, FILY…GIGL, IFYI…PLHT, HYST…YGLV, AHSL…IYAA, SSVS…DIGL, GALL…FLAG, LALP…GLIT, LLMA…LTPI, and LFLS…PDFV.

It belongs to the complex I subunit 4 family.

The protein localises to the plastid. It is found in the chloroplast thylakoid membrane. It carries out the reaction a plastoquinone + NADH + (n+1) H(+)(in) = a plastoquinol + NAD(+) + n H(+)(out). It catalyses the reaction a plastoquinone + NADPH + (n+1) H(+)(in) = a plastoquinol + NADP(+) + n H(+)(out). The sequence is that of NAD(P)H-quinone oxidoreductase chain 4, chloroplastic from Jasminum nudiflorum (Winter jasmine).